The following is a 356-amino-acid chain: MDSKDQHGTKILERLVKGEIGDEELKELIRIRFEKRLQCGYKPTPQDQLASEMAFIKSLKDMKMSGELEAVNTELYELPTAAVAATLGSTLKQSACYFKEESMSIDEAEIAAYELDCERAQIKDGQTILDIGCGFGGLVLHIAQKYKNSHVTGLTNSAEQRNYIMLQVEKLSLSNVDVILADVTKHEFENEKKFDRILVVEAIEHMKNIQLFLKKISNWMKDEDSFLFVVHLCHKAFSQHFEALDEDDWYTSYVLPEGSVTYLSASALLYFQDDVSVVDQWLLSGTHMARSQEEWFKRFKINLEAASKALTVGLGSEEAANQVNIQYKTFFMGYVVQFSFNNGEEWMISHYLFKKK.

Residues 93 to 94 (QS), 128 to 136 (ILDIGCGFG), and 155 to 160 (TNSAEQ) contribute to the S-adenosyl-L-methionine site.

Belongs to the CFA/CMAS family. In terms of tissue distribution, expressed in stems, roots, flower buds and leaves.

Its function is as follows. Probable N-methyltransferase not involved in benzylisoquinoline metabolism. Shows no detectable activity with (s)-coclaurine, (R)- or (S)-reticuline, papaverine or (R,S)-tetrahydropapaverine. In Papaver somniferum (Opium poppy), this protein is N-methyltransferase 4 (NMT4).